Reading from the N-terminus, the 139-residue chain is Putative pre-16S rRNA nuclease (139 aa).

This sequence belongs to the YqgF nuclease family.

It localises to the cytoplasm. In terms of biological role, could be a nuclease involved in processing of the 5'-end of pre-16S rRNA. The chain is Putative pre-16S rRNA nuclease from Streptococcus mutans serotype c (strain ATCC 700610 / UA159).